We begin with the raw amino-acid sequence, 1127 residues long: Structural protein MDM1 (1127 aa).

A PXA domain is found at 85 to 273 (NAQIGKELES…WNLRIVSLSQ (189 aa)). 3 positions are modified to phosphoserine: Ser670, Ser673, and Ser692. The stretch at 705–762 (SNNFRDNIASLTISIDQIEKELELLRHLILKADLTNNQMQLKILKKSQRTLLKELEMK) forms a coiled coil. In terms of domain architecture, PX spans 782–905 (TKIYIRSYFS…RFLTDPTPFK (124 aa)).

Belongs to the sorting nexin family.

It localises to the cytoplasm. Its function is as follows. Essential for mitotic growth. Mediates organelle inheritance. This is Structural protein MDM1 (MDM1) from Saccharomyces cerevisiae (strain ATCC 204508 / S288c) (Baker's yeast).